The sequence spans 754 residues: 5-methyltetrahydropteroyltriglutamate--homocysteine methyltransferase (754 aa).

Residues 17–20 and Lys-117 each bind 5-methyltetrahydropteroyltri-L-glutamate; that span reads RELK. Residues 431–433 and Glu-484 each bind L-homocysteine; that span reads IGS. L-methionine contacts are provided by residues 431–433 and Glu-484; that span reads IGS. 5-methyltetrahydropteroyltri-L-glutamate-binding positions include 515-516 and Trp-561; that span reads RC. L-homocysteine is bound at residue Asp-599. An L-methionine-binding site is contributed by Asp-599. Glu-605 lines the 5-methyltetrahydropteroyltri-L-glutamate pocket. The Zn(2+) site is built by His-641, Cys-643, and Glu-665. The active-site Proton donor is His-694. Zn(2+) is bound at residue Cys-726.

This sequence belongs to the vitamin-B12 independent methionine synthase family. It depends on Zn(2+) as a cofactor.

It catalyses the reaction 5-methyltetrahydropteroyltri-L-glutamate + L-homocysteine = tetrahydropteroyltri-L-glutamate + L-methionine. Its pathway is amino-acid biosynthesis; L-methionine biosynthesis via de novo pathway; L-methionine from L-homocysteine (MetE route): step 1/1. Catalyzes the transfer of a methyl group from 5-methyltetrahydrofolate to homocysteine resulting in methionine formation. In Salmonella enteritidis PT4 (strain P125109), this protein is 5-methyltetrahydropteroyltriglutamate--homocysteine methyltransferase.